Consider the following 347-residue polypeptide: Protein RecA (347 aa).

67–74 (GPESSGKT) is an ATP binding site.

This sequence belongs to the RecA family. In terms of processing, the protein migrates as a 40 kDa protein in strains 69A and NCTC 11637. When overexpressed in E.coli a 38 kDa protein is made which is unable to complement the E.coli deletion mutant. It has been suggested this size difference is due to a post-translational modification.

It localises to the cytoplasm. Can catalyze the hydrolysis of ATP in the presence of single-stranded DNA, the ATP-dependent uptake of single-stranded DNA by duplex DNA, and the ATP-dependent hybridization of homologous single-stranded DNAs. It interacts with LexA causing its activation and leading to its autocatalytic cleavage. Its function is as follows. Deletion of this gene leads to the inability of the bacteria to perform homologous recombination, and markedly increases UV sensitivity. In Helicobacter pylori (strain ATCC 700392 / 26695) (Campylobacter pylori), this protein is Protein RecA.